The following is a 323-amino-acid chain: Aldo-keto reductase family 1 member C4 (323 aa).

Residues 20–24 (GFGSY) and Asp-50 each bind NADP(+). Tyr-55 serves as the catalytic Proton donor. Residue His-117 coordinates substrate. NADP(+)-binding positions include 166–167 (SN), Gln-190, 216–221 (HSALGT), and 270–280 (KSYNEQRIREN).

This sequence belongs to the aldo/keto reductase family. In terms of assembly, monomer. High expression in liver. Also expressed in kidney.

It localises to the cytoplasm. Its subcellular location is the cytosol. The catalysed reaction is chlordecone alcohol + NADP(+) = chlordecone + NADPH + H(+). The enzyme catalyses a 3alpha-hydroxysteroid + NADP(+) = a 3-oxosteroid + NADPH + H(+). It catalyses the reaction a 3alpha-hydroxysteroid + NAD(+) = a 3-oxosteroid + NADH + H(+). It carries out the reaction 5alpha-androstane-3alpha,17beta-diol + NADP(+) = 17beta-hydroxy-5alpha-androstan-3-one + NADPH + H(+). The catalysed reaction is 5alpha-androstane-3beta,17beta-diol + NADP(+) = 17beta-hydroxy-5alpha-androstan-3-one + NADPH + H(+). The enzyme catalyses 5alpha-androstane-3alpha,17beta-diol + NAD(+) = 17beta-hydroxy-5alpha-androstan-3-one + NADH + H(+). It catalyses the reaction 17beta-estradiol + NADP(+) = estrone + NADPH + H(+). It carries out the reaction 17beta-estradiol + NAD(+) = estrone + NADH + H(+). The catalysed reaction is (20S)-hydroxypregn-4-en-3-one + NADP(+) = progesterone + NADPH + H(+). The enzyme catalyses (20S)-hydroxypregn-4-en-3-one + NAD(+) = progesterone + NADH + H(+). It catalyses the reaction androsterone + NADP(+) = 5alpha-androstan-3,17-dione + NADPH + H(+). It carries out the reaction testosterone + NADP(+) = androst-4-ene-3,17-dione + NADPH + H(+). The catalysed reaction is testosterone + NAD(+) = androst-4-ene-3,17-dione + NADH + H(+). The enzyme catalyses 3alpha-hydroxy-5alpha-androstane 17-O-(beta-D-glucuronate) + NADP(+) = 5alpha-dihydrotestosterone 17-O-(beta-D-glucuronate) + NADPH + H(+). It catalyses the reaction (3beta,5alpha,17beta)-3-hydroxy-androstan-17-yl sulfate + NADP(+) = 5alpha-dihydrotestosterone sulfate + NADPH + H(+). It carries out the reaction 5alpha-androstane-3alpha,17beta-diol + NAD(+) = androsterone + NADH + H(+). Its pathway is steroid metabolism. Potently inhibited by benzbromarone, 3',3'',5',5''-tetrabromophenolphthalein (TBPP) and o-cresolphthalein. Its function is as follows. Cytosolic aldo-keto reductase that catalyzes the NADH and NADPH-dependent reduction of ketosteroids to hydroxysteroids. Liver specific enzyme that acts as an NAD(P)(H)-dependent 3-, 17- and 20-ketosteroid reductase on the steroid nucleus and side chain. Displays the ability to catalyze both oxidation and reduction in vitro, but most probably acts as a reductase in vivo since the oxidase activity measured in vitro is inhibited by physiological concentration of NADPH. Acts preferentially as a 3-alpha-hydroxysteroid dehydrogenase (HSD) with a subsidiary 3-beta-HSD activity. Catalyzes efficiently the transformation of the potent androgen 5-alpha-dihydrotestosterone (5alpha-DHT or 17beta-hydroxy-5alpha-androstan-3-one) into the less active form, 5-alpha-androstan-3-alpha,17-beta-diol (3-alpha-diol). Catalyzes the reduction of estrone into 17beta-estradiol but with low efficiency. Metabolizes a broad spectrum of natural and synthetic therapeutic steroid and plays an important role in metabolism of androgens, estrogens, progestereone and conjugated steroids. Catalyzes the biotransformation of the pesticide chlordecone (kepone) to its corresponding alcohol leading to increased biliary excretion of the pesticide and concomitant reduction of its neurotoxicity since bile is the major excretory route. The chain is Aldo-keto reductase family 1 member C4 (AKR1C4) from Macaca fuscata fuscata (Japanese macaque).